We begin with the raw amino-acid sequence, 605 residues long: Methyl-CpG-binding domain protein 1 (605 aa).

Residues Met1–Leu69 enclose the MBD domain. Residues Ala80 to Ala123 form a disordered region. Positions Ser83 to Gln99 are enriched in basic residues. Residues Lys84–Lys88 carry the Nuclear localization signal motif. Positions Glu106 to Thr120 are enriched in basic and acidic residues. Lys117 is covalently cross-linked (Glycyl lysine isopeptide (Lys-Gly) (interchain with G-Cter in SUMO2)). 2 CXXC-type zinc fingers span residues Arg169–Leu216 and Arg217–Leu263. Zn(2+)-binding residues include Cys176, Cys179, Cys182, Cys188, Cys191, Cys194, Cys210, Cys215, Cys225, Cys228, Cys231, Cys237, Cys240, Cys243, Cys257, and Cys262. A disordered region spans residues Arg269–Leu308. Residue Lys277 forms a Glycyl lysine isopeptide (Lys-Gly) (interchain with G-Cter in SUMO2) linkage. Over residues Gln287–Ser297 the composition is skewed to pro residues. Residue Ser297 is modified to Phosphoserine. A CXXC-type 3 zinc finger spans residues Thr330–Leu378. 8 residues coordinate Zn(2+): Cys338, Cys341, Cys344, Cys350, Cys353, Cys356, Cys372, and Cys377. Ser391 and Ser399 each carry phosphoserine. Residues Ser391 to Pro451 are disordered. Residues Tyr403 to Leu417 are compositionally biased toward basic residues. Lys422 is covalently cross-linked (Glycyl lysine isopeptide (Lys-Gly) (interchain with G-Cter in SUMO2)). The span at Ala426 to Thr439 shows a compositional bias: polar residues. Lys440 participates in a covalent cross-link: Glycyl lysine isopeptide (Lys-Gly) (interchain with G-Cter in SUMO2). Residues Lys499 and Lys538 each participate in a glycyl lysine isopeptide (Lys-Gly) (interchain with G-Cter in SUMO2); alternate cross-link. A disordered region spans residues Val520 to Ile573. Residues Ala529–Pro592 are transcriptional repression domain (TRD). Residue Lys558 forms a Glycyl lysine isopeptide (Lys-Gly) (interchain with G-Cter in SUMO2) linkage.

As to quaternary structure, interacts with OASL, ATF7IP, ATF7IP2 and BAHD1. Binds CHAF1A and the SUV39H1-CBX5 complex via the MBD domain. Binds MGP via the TRD domain. May be part of the MeCP1 complex. Sumoylated, sumoylation may increase interaction with ATF7IP. In terms of tissue distribution, widely expressed.

Its subcellular location is the nucleus. The protein resides in the nucleus matrix. It localises to the nucleus speckle. The protein localises to the chromosome. Transcriptional repressor that binds CpG islands in promoters where the DNA is methylated at position 5 of cytosine within CpG dinucleotides. Binding is abolished by the presence of 7-mG that is produced by DNA damage by methylmethanesulfonate (MMS). Acts as transcriptional repressor and plays a role in gene silencing by recruiting ATF7IP, which in turn recruits factors such as the histone methyltransferase SETDB1. Probably forms a complex with SETDB1 and ATF7IP that represses transcription and couples DNA methylation and histone 'Lys-9' trimethylation. Isoform 1 and isoform 2 can also repress transcription from unmethylated promoters. The sequence is that of Methyl-CpG-binding domain protein 1 from Homo sapiens (Human).